Here is a 157-residue protein sequence, read N- to C-terminus: MYPPKASGDPAAGAAPVTGFPVGGPAASSQWSSGLLDCFDDCGLCCLTCWCPCITFGRVAEIVDRGATSCGTAGALYAVLAYFTGCQWIYSCTYRAKMRAQLGLPETPCCDCLVHFCCEPCALCQQYKELKARGFDPVLGWDRNATMLPPSAQGMGR.

The next 2 helical transmembrane spans lie at 41–57 and 66–83; these read DCGL…ITFG and GATS…LAYF.

It belongs to the cornifelin family. As to expression, expressed in roots, leaves, stalks, immature ears and silks.

The protein resides in the membrane. The chain is Cell number regulator 10 (CNR10) from Zea mays (Maize).